A 128-amino-acid polypeptide reads, in one-letter code: Small ribosomal subunit protein eS8 (128 aa).

Residues 1-31 (MAWYQGNDLRKPTGGKKTRHRKKRKHELGRP) are disordered. Over residues 13–27 (TGGKKTRHRKKRKHE) the composition is skewed to basic residues.

This sequence belongs to the eukaryotic ribosomal protein eS8 family. In terms of assembly, part of the 30S ribosomal subunit.

This is Small ribosomal subunit protein eS8 from Staphylothermus marinus (strain ATCC 43588 / DSM 3639 / JCM 9404 / F1).